The chain runs to 464 residues: UDP-N-acetylmuramoylalanine--D-glutamate ligase (464 aa).

112–118 is a binding site for ATP; the sequence is GTDGKTT.

It belongs to the MurCDEF family.

The protein resides in the cytoplasm. It catalyses the reaction UDP-N-acetyl-alpha-D-muramoyl-L-alanine + D-glutamate + ATP = UDP-N-acetyl-alpha-D-muramoyl-L-alanyl-D-glutamate + ADP + phosphate + H(+). It participates in cell wall biogenesis; peptidoglycan biosynthesis. Cell wall formation. Catalyzes the addition of glutamate to the nucleotide precursor UDP-N-acetylmuramoyl-L-alanine (UMA). The polypeptide is UDP-N-acetylmuramoylalanine--D-glutamate ligase (Pelodictyon phaeoclathratiforme (strain DSM 5477 / BU-1)).